The sequence spans 421 residues: Putative bifunctional polynucleotide phosphatase/kinase (421 aa).

A phosphatase region spans residues Asp25–Leu231. Residues Asn235–Met415 form a kinase region. Position 265–272 (Gly265–Ser272) interacts with ATP.

It in the N-terminal section; belongs to the DNA 3' phosphatase family.

It carries out the reaction a 3'end (2'-deoxyribonucleotide 3'-phosphate)-DNA + H2O = a 3'-end 2'-deoxyribonucleotide-DNA + phosphate. It catalyses the reaction a 5'-end dephospho-2'-deoxyribonucleoside-DNA + ATP = a 5'-end 5'-phospho-2'-deoxyribonucleoside-DNA + ADP + H(+). This Acanthamoeba polyphaga mimivirus (APMV) protein is Putative bifunctional polynucleotide phosphatase/kinase.